The following is a 198-amino-acid chain: ADP-ribosylation factor-like protein 3 (198 aa).

Residue Met-1 is modified to N-acetylmethionine. A GTP-binding site is contributed by 24–31 (GLDNAGKT). Lys-50 participates in a covalent cross-link: Glycyl lysine isopeptide (Lys-Gly) (interchain with G-Cter in ubiquitin). GTP is bound by residues 74-78 (DVGGQ) and 133-136 (NKQD).

It belongs to the small GTPase superfamily. Arf family. In terms of assembly, interacts with SYS1 and SLO1.

Its subcellular location is the golgi apparatus. In terms of biological role, involved in the targeting of ARL1 to the Golgi. Can bind and hydrolyze GTP. In Saccharomyces cerevisiae (strain ATCC 204508 / S288c) (Baker's yeast), this protein is ADP-ribosylation factor-like protein 3 (ARL3).